A 702-amino-acid chain; its full sequence is Elongation factor G (702 aa).

In terms of domain architecture, tr-type G spans 9–292; it reads DRTRNIGIMA…AVVDYLPSPL (284 aa). GTP is bound by residues 18-25, 91-95, and 145-148; these read AHIDAGKT, DTPGH, and NKMD.

This sequence belongs to the TRAFAC class translation factor GTPase superfamily. Classic translation factor GTPase family. EF-G/EF-2 subfamily.

It is found in the cytoplasm. Functionally, catalyzes the GTP-dependent ribosomal translocation step during translation elongation. During this step, the ribosome changes from the pre-translocational (PRE) to the post-translocational (POST) state as the newly formed A-site-bound peptidyl-tRNA and P-site-bound deacylated tRNA move to the P and E sites, respectively. Catalyzes the coordinated movement of the two tRNA molecules, the mRNA and conformational changes in the ribosome. The protein is Elongation factor G of Oenococcus oeni (strain ATCC BAA-331 / PSU-1).